Here is a 579-residue protein sequence, read N- to C-terminus: Aspartate--tRNA(Asp/Asn) ligase (579 aa).

L-aspartate is bound at residue E169. The aspartate stretch occupies residues 193–196 (QLFK). R215 contacts L-aspartate. Residues 215-217 (RDE) and Q224 each bind ATP. H437 lines the L-aspartate pocket. ATP is bound at residue E471. L-aspartate is bound at residue R478. An ATP-binding site is contributed by 523-526 (GWDR). The disordered stretch occupies residues 551–579 (DPLTGAPTPITAEQRREAGVDAVPEQATS).

The protein belongs to the class-II aminoacyl-tRNA synthetase family. Type 1 subfamily. In terms of assembly, homodimer.

The protein localises to the cytoplasm. It catalyses the reaction tRNA(Asx) + L-aspartate + ATP = L-aspartyl-tRNA(Asx) + AMP + diphosphate. In terms of biological role, aspartyl-tRNA synthetase with relaxed tRNA specificity since it is able to aspartylate not only its cognate tRNA(Asp) but also tRNA(Asn). Reaction proceeds in two steps: L-aspartate is first activated by ATP to form Asp-AMP and then transferred to the acceptor end of tRNA(Asp/Asn). This is Aspartate--tRNA(Asp/Asn) ligase from Thermobifida fusca (strain YX).